The sequence spans 764 residues: Probable 5-methyltetrahydropteroyltriglutamate--homocysteine methyltransferase (764 aa).

5-methyltetrahydropteroyltri-L-glutamate contacts are provided by lysine 19 and asparagine 126. Phosphoserine is present on serine 182. At threonine 441 the chain carries Phosphothreonine. L-homocysteine-binding positions include 442–444 (IGS) and glutamate 495. Residues 442-444 (IGS) and glutamate 495 each bind L-methionine. Residues aspartate 500, tyrosine 523, 526–527 (RC), and tryptophan 572 contribute to the 5-methyltetrahydropteroyltri-L-glutamate site. Residue aspartate 610 participates in L-homocysteine binding. An L-methionine-binding site is contributed by aspartate 610. The Zn(2+) site is built by histidine 652, cysteine 654, and glutamate 676. Residue histidine 703 is the Proton donor of the active site. Cysteine 735 contributes to the Zn(2+) binding site.

This sequence belongs to the vitamin-B12 independent methionine synthase family. Requires Zn(2+) as cofactor.

It localises to the nucleus. Its subcellular location is the cytoplasm. The enzyme catalyses 5-methyltetrahydropteroyltri-L-glutamate + L-homocysteine = tetrahydropteroyltri-L-glutamate + L-methionine. Its pathway is amino-acid biosynthesis; L-methionine biosynthesis via de novo pathway; L-methionine from L-homocysteine (MetE route): step 1/1. Functionally, catalyzes the transfer of a methyl group from 5-methyltetrahydrofolate to homocysteine resulting in methionine formation. This Schizosaccharomyces pombe (strain 972 / ATCC 24843) (Fission yeast) protein is Probable 5-methyltetrahydropteroyltriglutamate--homocysteine methyltransferase (met26).